A 317-amino-acid chain; its full sequence is Hydroxyacyl-CoA dehydrogenase ChsB1 (317 aa).

9 residues coordinate NAD(+): Leu32, Asp51, Asp82, Ile83, Asn108, Ser168, Tyr181, Lys185, and Thr215. Catalysis depends on residues Ser168, Tyr181, and Lys185.

This sequence belongs to the short-chain dehydrogenases/reductases (SDR) family. Homodimer, with 1 active site on each face.

The enzyme catalyses (22S)-hydroxy-3-oxo-chol-4-ene-24-oyl-CoA + NAD(+) = 3,22-dioxochol-4-en-24-oyl-CoA + NADH + H(+). It functions in the pathway steroid metabolism; cholesterol degradation. A reversible dehydrogenase involved in cholesterol side-chain degradation. Catalyzes the oxidation of hydroxyl-cholesterol-CoA ester metabolic intermediate (22S)-HOCO-CoA (3-oxo-chol-4-ene-(22S)-hydroxy-24-oyl-CoA), the product of ChsH3, has no activity on (22R)-HOCO-CoA (the product of EchA19). Also acts on (3R)-hydroxyoctanoyl-CoA and 17-beta-hydroxyandrost-4-en-3-one, but not on 7-alpha-hydroxyandrost-4-en-3-one, uses NAD(+) but not NADP(+). The chain is Hydroxyacyl-CoA dehydrogenase ChsB1 from Mycobacterium tuberculosis (strain ATCC 25618 / H37Rv).